Here is a 411-residue protein sequence, read N- to C-terminus: Na(+)/H(+) antiporter NhaA 2 (411 aa).

The next 10 membrane-spanning stretches (helical) occupy residues 18–38 (VGGS…NSPV), 59–79 (LTVG…VAGL), 97–117 (LLPI…AATI), 127–147 (GWAI…ALTG), 167–187 (LLAI…LWLL), 218–238 (WYCM…LGLL), 261–281 (PLSA…VALS), 297–317 (VIAG…WLAI), 338–358 (VLGA…LAGI), and 366–386 (IAKV…SALL).

Belongs to the NhaA Na(+)/H(+) (TC 2.A.33) antiporter family.

The protein localises to the cell membrane. It carries out the reaction Na(+)(in) + 2 H(+)(out) = Na(+)(out) + 2 H(+)(in). Its function is as follows. Na(+)/H(+) antiporter that extrudes sodium in exchange for external protons. In Rhodococcus jostii (strain RHA1), this protein is Na(+)/H(+) antiporter NhaA 2.